The following is a 511-amino-acid chain: Putative CBL-interacting protein kinase 13 (511 aa).

Residues 25–279 (FEVGKLLGQG…AEGIMENEWF (255 aa)) form the Protein kinase domain. ATP is bound by residues 31–39 (LGQGNFAKV) and Lys-54. The active-site Proton acceptor is Asp-147. The interval 165–194 (DFGLSAVADGMRRDGLFHTFCGTPAYVAPE) is activation loop. Residues 307 to 340 (VDAPTSPPDTPRTVDSGDVGAAPTRPRKAGSLTS) form a disordered region. Positions 321–383 (DSGDVGAAPT…PGFDLSGLFD (63 aa)) constitute an NAF domain. Residues 400 to 429 (KHTARFVSAAPVEVIVATLEAAAAAAGMAV) form a PPI region.

It belongs to the protein kinase superfamily. CAMK Ser/Thr protein kinase family. SNF1 subfamily. Requires Mn(2+) as cofactor.

The catalysed reaction is L-seryl-[protein] + ATP = O-phospho-L-seryl-[protein] + ADP + H(+). It catalyses the reaction L-threonyl-[protein] + ATP = O-phospho-L-threonyl-[protein] + ADP + H(+). CIPK serine-threonine protein kinases interact with CBL proteins. Binding of a CBL protein to the regulatory NAF domain of CIPK protein lead to the activation of the kinase in a calcium-dependent manner. The chain is Putative CBL-interacting protein kinase 13 (CIPK13) from Oryza sativa subsp. japonica (Rice).